A 228-amino-acid polypeptide reads, in one-letter code: tRNA (guanine-N(1)-)-methyltransferase (228 aa).

Residues G111 and 131–136 each bind S-adenosyl-L-methionine; that span reads IGDFIL.

Belongs to the RNA methyltransferase TrmD family. In terms of assembly, homodimer.

It is found in the cytoplasm. The enzyme catalyses guanosine(37) in tRNA + S-adenosyl-L-methionine = N(1)-methylguanosine(37) in tRNA + S-adenosyl-L-homocysteine + H(+). In terms of biological role, specifically methylates guanosine-37 in various tRNAs. The chain is tRNA (guanine-N(1)-)-methyltransferase from Pelagibacter ubique (strain HTCC1062).